The primary structure comprises 70 residues: Conotoxin Im23.4 (70 aa).

An N-terminal signal peptide occupies residues 1-22 (MIMRMTLTLFVLVVMTAASASG). The propeptide occupies 23 to 30 (DALTEAKR). Intrachain disulfides connect cysteine 34–cysteine 41, cysteine 45–cysteine 53, and cysteine 54–cysteine 69.

The protein belongs to the conotoxin K superfamily. In terms of tissue distribution, expressed by the venom duct.

The protein localises to the secreted. In terms of biological role, probable neurotoxin. This chain is Conotoxin Im23.4, found in Conus imperialis (Imperial cone).